We begin with the raw amino-acid sequence, 303 residues long: GTPase Era (303 aa).

One can recognise an Era-type G domain in the interval 7–176 (KSGFVAIIGR…LDNVVSHLDE (170 aa)). Residues 15-22 (GRPNVGKS) form a G1 region. Residue 15 to 22 (GRPNVGKS) participates in GTP binding. Residues 41–45 (QTTRN) are G2. The segment at 62-65 (DTPG) is G3. GTP contacts are provided by residues 62 to 66 (DTPGV) and 125 to 128 (NKVD). The G4 stretch occupies residues 125–128 (NKVD). The interval 155-157 (ISA) is G5. In terms of domain architecture, KH type-2 spans 207–284 (TRQEVPHSVA…FLETWVKVEP (78 aa)).

It belongs to the TRAFAC class TrmE-Era-EngA-EngB-Septin-like GTPase superfamily. Era GTPase family. As to quaternary structure, monomer.

Its subcellular location is the cytoplasm. The protein localises to the cell membrane. Its function is as follows. An essential GTPase that binds both GDP and GTP, with rapid nucleotide exchange. Plays a role in 16S rRNA processing and 30S ribosomal subunit biogenesis and possibly also in cell cycle regulation and energy metabolism. In Leuconostoc citreum (strain KM20), this protein is GTPase Era.